A 158-amino-acid polypeptide reads, in one-letter code: 2-C-methyl-D-erythritol 2,4-cyclodiphosphate synthase (158 aa).

Aspartate 8 and histidine 10 together coordinate a divalent metal cation. Residues 8–10 (DVH) and 34–35 (HS) each bind 4-CDP-2-C-methyl-D-erythritol 2-phosphate. Histidine 42 contacts a divalent metal cation. 4-CDP-2-C-methyl-D-erythritol 2-phosphate is bound by residues 56–58 (DIG), 61–65 (FPDTD), 100–106 (AQKPKML), 132–135 (TTEE), phenylalanine 139, and lysine 142.

The protein belongs to the IspF family. In terms of assembly, homotrimer. A divalent metal cation serves as cofactor.

The catalysed reaction is 4-CDP-2-C-methyl-D-erythritol 2-phosphate = 2-C-methyl-D-erythritol 2,4-cyclic diphosphate + CMP. It functions in the pathway isoprenoid biosynthesis; isopentenyl diphosphate biosynthesis via DXP pathway; isopentenyl diphosphate from 1-deoxy-D-xylulose 5-phosphate: step 4/6. Functionally, involved in the biosynthesis of isopentenyl diphosphate (IPP) and dimethylallyl diphosphate (DMAPP), two major building blocks of isoprenoid compounds. Catalyzes the conversion of 4-diphosphocytidyl-2-C-methyl-D-erythritol 2-phosphate (CDP-ME2P) to 2-C-methyl-D-erythritol 2,4-cyclodiphosphate (ME-CPP) with a corresponding release of cytidine 5-monophosphate (CMP). This Clostridium tetani (strain Massachusetts / E88) protein is 2-C-methyl-D-erythritol 2,4-cyclodiphosphate synthase.